The sequence spans 191 residues: Protein GrpE (191 aa).

Residues 1–10 show a composition bias toward basic and acidic residues; that stretch reads MNHEEQKVET. The segment at 1–28 is disordered; that stretch reads MNHEEQKVETMEQVEAQPVEPTDVDSEV.

This sequence belongs to the GrpE family. As to quaternary structure, homodimer.

Its subcellular location is the cytoplasm. Participates actively in the response to hyperosmotic and heat shock by preventing the aggregation of stress-denatured proteins, in association with DnaK and GrpE. It is the nucleotide exchange factor for DnaK and may function as a thermosensor. Unfolded proteins bind initially to DnaJ; upon interaction with the DnaJ-bound protein, DnaK hydrolyzes its bound ATP, resulting in the formation of a stable complex. GrpE releases ADP from DnaK; ATP binding to DnaK triggers the release of the substrate protein, thus completing the reaction cycle. Several rounds of ATP-dependent interactions between DnaJ, DnaK and GrpE are required for fully efficient folding. This chain is Protein GrpE, found in Aeromonas salmonicida (strain A449).